The primary structure comprises 321 residues: Malate dehydrogenase (321 aa).

Residues 10–15 (GAGQIG) and D34 each bind NAD(+). Substrate-binding residues include R83 and R89. Residues N96 and 119-121 (ITN) each bind NAD(+). Positions 121 and 152 each coordinate substrate. H176 acts as the Proton acceptor in catalysis.

Belongs to the LDH/MDH superfamily. MDH type 3 family.

It catalyses the reaction (S)-malate + NAD(+) = oxaloacetate + NADH + H(+). Catalyzes the reversible oxidation of malate to oxaloacetate. In Methylocella silvestris (strain DSM 15510 / CIP 108128 / LMG 27833 / NCIMB 13906 / BL2), this protein is Malate dehydrogenase.